We begin with the raw amino-acid sequence, 217 residues long: Elongation factor Ts (217 aa).

The involved in Mg(2+) ion dislocation from EF-Tu stretch occupies residues Thr-82–Val-85.

Belongs to the EF-Ts family.

It localises to the cytoplasm. Functionally, associates with the EF-Tu.GDP complex and induces the exchange of GDP to GTP. It remains bound to the aminoacyl-tRNA.EF-Tu.GTP complex up to the GTP hydrolysis stage on the ribosome. The protein is Elongation factor Ts of Desulfitobacterium hafniense (strain DSM 10664 / DCB-2).